Reading from the N-terminus, the 86-residue chain is MSVARNLWRVADAPHIVPADSVERQTAERLINACPAGLFSLTPEGNLRIDYRSCLECGTCRLLCDESTLQQWRYPPSGFGITYRFG.

Residues 45 to 74 (GNLRIDYRSCLECGTCRLLCDESTLQQWRY) enclose the 4Fe-4S ferredoxin-type domain.

It belongs to the bacterial-type ferredoxin family. FixX subfamily.

Could be a 3Fe-4S cluster-containing protein. Probably participates in a redox process with YgcN, YgcQ and YgcR. The sequence is that of Ferredoxin-like protein YgcO (ygcO) from Escherichia coli (strain K12).